Reading from the N-terminus, the 1125-residue chain is Kinase and exchange factor for Rac B (1125 aa).

Disordered regions lie at residues 50 to 175, 247 to 287, and 322 to 362; these read VTGG…ASIN, SVPG…GGKF, and KTRD…VNSD. The span at 59 to 91 shows a compositional bias: low complexity; sequence NNQQQQQNNNNNNNNNNNNNNNNNNNNNNNNNN. The segment covering 92–106 has biased composition (polar residues); the sequence is SGEISSNNSTPSILF. Residues 113-124 show a composition bias toward pro residues; that stretch reads TAPPAPPQPTTP. The span at 137–161 shows a compositional bias: low complexity; sequence NINQQPIGGVNNNNNNNNKDSPSNK. Residues 380–571 form the DH domain; that stretch reads KRRQVSLQIL…KSTVDYVKEK (192 aa). A PH domain is found at 601–822; the sequence is RYVREGMLTE…WIQAIHANII (222 aa). Disordered stretches follow at residues 693–729 and 761–791; these read INNM…SNNN and SNNN…YSNG. Residues 694-729 are compositionally biased toward low complexity; it reads NNMTNNDSKSKNNNNNNSNGNNNNNNINSNSNSNNN. Positions 848-1117 constitute a Protein kinase domain; sequence IKLCEQIGSG…QLVQKLTKML (270 aa). ATP contacts are provided by residues 854 to 862 and Lys876; that span reads IGSGGSGCT. The Proton acceptor role is filled by Asp971.

It belongs to the protein kinase superfamily. STE Ser/Thr protein kinase family. The cofactor is Mg(2+).

It catalyses the reaction L-seryl-[protein] + ATP = O-phospho-L-seryl-[protein] + ADP + H(+). The enzyme catalyses L-threonyl-[protein] + ATP = O-phospho-L-threonyl-[protein] + ADP + H(+). In Dictyostelium discoideum (Social amoeba), this protein is Kinase and exchange factor for Rac B.